A 115-amino-acid polypeptide reads, in one-letter code: Transmembrane protein 14C (115 aa).

The next 4 membrane-spanning stretches (helical) occupy residues 8–28 (LVPLHYYGFGYAALVATGGII), 33–53 (AGSVPSLAAGLFFGGLAGLGA), 63–83 (VWVFLATSGTLAGIMGMRFYN), and 88–108 (MPAGLIAGASLLMVAPGVAKI).

The protein belongs to the TMEM14 family.

The protein localises to the mitochondrion membrane. Required for normal heme biosynthesis. This chain is Transmembrane protein 14C (Tmem14c), found in Rattus norvegicus (Rat).